A 442-amino-acid polypeptide reads, in one-letter code: 3-isopropylmalate dehydratase large subunit (442 aa).

Positions 347, 407, and 410 each coordinate [4Fe-4S] cluster.

This sequence belongs to the aconitase/IPM isomerase family. LeuC type 1 subfamily. As to quaternary structure, heterodimer of LeuC and LeuD. The cofactor is [4Fe-4S] cluster.

The catalysed reaction is (2R,3S)-3-isopropylmalate = (2S)-2-isopropylmalate. It participates in amino-acid biosynthesis; L-leucine biosynthesis; L-leucine from 3-methyl-2-oxobutanoate: step 2/4. Catalyzes the isomerization between 2-isopropylmalate and 3-isopropylmalate, via the formation of 2-isopropylmaleate. The sequence is that of 3-isopropylmalate dehydratase large subunit from Buchnera aphidicola subsp. Macrosiphoniella ludovicianae.